The primary structure comprises 266 residues: Indole-3-glycerol phosphate synthase (266 aa).

The protein belongs to the TrpC family.

The enzyme catalyses 1-(2-carboxyphenylamino)-1-deoxy-D-ribulose 5-phosphate + H(+) = (1S,2R)-1-C-(indol-3-yl)glycerol 3-phosphate + CO2 + H2O. It functions in the pathway amino-acid biosynthesis; L-tryptophan biosynthesis; L-tryptophan from chorismate: step 4/5. In Acidovorax sp. (strain JS42), this protein is Indole-3-glycerol phosphate synthase.